The chain runs to 412 residues: Tyrosine--tRNA ligase (412 aa).

The 'HIGH' region signature appears at 50–59; sequence PTGTDIHLGH. Positions 244-248 match the 'KMSKS' region motif; it reads KMSKS. K247 lines the ATP pocket. In terms of domain architecture, S4 RNA-binding spans 348–411; the sequence is VKFFYLLSSL…IGKKIIKRFE (64 aa).

Belongs to the class-I aminoacyl-tRNA synthetase family. TyrS type 2 subfamily. As to quaternary structure, homodimer.

Its subcellular location is the cytoplasm. The enzyme catalyses tRNA(Tyr) + L-tyrosine + ATP = L-tyrosyl-tRNA(Tyr) + AMP + diphosphate + H(+). Functionally, catalyzes the attachment of tyrosine to tRNA(Tyr) in a two-step reaction: tyrosine is first activated by ATP to form Tyr-AMP and then transferred to the acceptor end of tRNA(Tyr). This chain is Tyrosine--tRNA ligase, found in Prochlorococcus marinus (strain MIT 9312).